The sequence spans 148 residues: Leghemoglobin 2 (148 aa).

Positions 2-148 (GFTEKQEALV…LSAAIKKAMS (147 aa)) constitute a Globin domain. At Tyr-30 the chain carries Nitrated tyrosine. Ser-45 serves as a coordination point for heme b. Ser-45 is modified (phosphoserine). His-63 lines the O2 pocket. Positions 66, 95, and 98 each coordinate heme b. The residue at position 136 (Tyr-136) is a Nitrated tyrosine.

The protein belongs to the plant globin family. Monomer. Post-translationally, nitrated in effective nodules and particularly in hypoxic conditions; this mechanism may play a protective role in the symbiosis by buffering toxic peroxynitrite NO(2)(-). Nitration level decrease during nodule senescence. In terms of processing, phosphorylation at Ser-45 disrupts the molecular environment of its porphyrin ring oxygen binding pocket, thus leading to a reduced oxygen consumption and to the delivery of oxygen O(2) to symbiosomes. Stem nodules.

It localises to the cytoplasm. It is found in the cytosol. Its subcellular location is the nucleus. Leghemoglobin that reversibly binds oxygen O(2) through a pentacoordinated heme iron. In stem nodules, facilitates the diffusion of oxygen to the bacteroids while preventing the bacterial nitrogenase from being inactivated by buffering dioxygen, nitric oxide and carbon monoxide, and promoting the formation of reactive oxygen species (ROS, e.g. H(2)O(2)). This role is essential for symbiotic nitrogen fixation (SNF). In Sesbania rostrata, this protein is Leghemoglobin 2.